A 521-amino-acid chain; its full sequence is Phosphoenolpyruvate carboxykinase (ATP) (521 aa).

3 residues coordinate substrate: Arg52, Tyr186, and Lys192. Residues Lys192, His211, and 227-235 contribute to the ATP site; that span reads GLSGTGKTT. Residues Lys192 and His211 each contribute to the Mn(2+) site. Asp248 lines the Mn(2+) pocket. Residues Glu276, Arg313, 432-433, and Thr438 each bind ATP; that span reads RI. Arg313 is a binding site for substrate.

Belongs to the phosphoenolpyruvate carboxykinase (ATP) family. Requires Mn(2+) as cofactor.

It is found in the cytoplasm. It carries out the reaction oxaloacetate + ATP = phosphoenolpyruvate + ADP + CO2. The protein operates within carbohydrate biosynthesis; gluconeogenesis. Functionally, involved in the gluconeogenesis. Catalyzes the conversion of oxaloacetate (OAA) to phosphoenolpyruvate (PEP) through direct phosphoryl transfer between the nucleoside triphosphate and OAA. The chain is Phosphoenolpyruvate carboxykinase (ATP) from Caldanaerobacter subterraneus subsp. tengcongensis (strain DSM 15242 / JCM 11007 / NBRC 100824 / MB4) (Thermoanaerobacter tengcongensis).